Reading from the N-terminus, the 634-residue chain is ATP-dependent zinc metalloprotease FtsH (634 aa).

The Cytoplasmic segment spans residues 1-5; it reads MNALK. The chain crosses the membrane as a helical span at residues 6 to 26; that stretch reads NFFIWAIIIGAAIVAFNLFEG. The Periplasmic portion of the chain corresponds to 27–100; it reads KREFTTKVSL…VANPEPPGGW (74 aa). A helical transmembrane segment spans residues 101 to 121; sequence LVNVFLSWLPILFFIGIWIFL. The Cytoplasmic segment spans residues 122 to 634; sequence LRQMSGGGNV…KSEEVKEEVV (513 aa). Position 195-202 (195-202) interacts with ATP; it reads GEPGVGKT. Position 418 (His-418) interacts with Zn(2+). The active site involves Glu-419. Zn(2+) is bound by residues His-422 and Asp-496. The interval 615 to 634 is disordered; the sequence is DRKSEENKELKSEEVKEEVV.

It in the central section; belongs to the AAA ATPase family. The protein in the C-terminal section; belongs to the peptidase M41 family. The isolated protease domain (residues 405-634) forms a stable hexamer. The cofactor is Zn(2+).

It is found in the cell inner membrane. Its function is as follows. Acts as a processive, ATP-dependent zinc metallopeptidase for both cytoplasmic and membrane proteins. Plays a role in the quality control of integral membrane proteins. In Aquifex aeolicus (strain VF5), this protein is ATP-dependent zinc metalloprotease FtsH.